Reading from the N-terminus, the 540-residue chain is Threonine--tRNA ligase catalytic subunit (540 aa).

Residues 134–428 (DHRIIGERLD…LLEHFRGKLP (295 aa)) are catalytic. C226, H277, and H405 together coordinate Zn(2+).

The protein belongs to the class-II aminoacyl-tRNA synthetase family. In terms of assembly, homodimer. Probably interacts with its editing subunit. Zn(2+) is required as a cofactor.

It localises to the cytoplasm. It carries out the reaction tRNA(Thr) + L-threonine + ATP = L-threonyl-tRNA(Thr) + AMP + diphosphate + H(+). Functionally, catalyzes the attachment of threonine to tRNA(Thr) in a two-step reaction: L-threonine is first activated by ATP to form Thr-AMP and then transferred to the acceptor end of tRNA(Thr). Also activates L-serine and transfers it to tRNA(Thr) but cannot deacylate incorrectly charged amino acid; unlike most archaea the editing function is found in a freestanding protein. The polypeptide is Threonine--tRNA ligase catalytic subunit (Sulfurisphaera tokodaii (strain DSM 16993 / JCM 10545 / NBRC 100140 / 7) (Sulfolobus tokodaii)).